Reading from the N-terminus, the 495-residue chain is Averantin hydroxylase (495 aa).

A helical transmembrane segment spans residues 12 to 32 (ILLLIVLTVLTPPSLALYRLW). Residues asparagine 258 and asparagine 289 are each glycosylated (N-linked (GlcNAc...) asparagine). A heme-binding site is contributed by cysteine 436.

Belongs to the cytochrome P450 family. Heme is required as a cofactor.

It is found in the membrane. The catalysed reaction is (1'S)-averantin + reduced [NADPH--hemoprotein reductase] + O2 = (1'S,5'R)-5'-hydroxyaverantin + oxidized [NADPH--hemoprotein reductase] + H2O. The enzyme catalyses (1'S)-averantin + reduced [NADPH--hemoprotein reductase] + O2 = (1'S,5'S)-5'-hydroxyaverantin + oxidized [NADPH--hemoprotein reductase] + H2O + H(+). Its pathway is mycotoxin biosynthesis; aflatoxin biosynthesis. Its function is as follows. Averantin hydroxylase; part of the gene cluster that mediates the biosynthesis of aflatoxins, a group of polyketide-derived furanocoumarins, and part of the most toxic and carcinogenic compounds among the known mycotoxins. The four major aflatoxins produced by A.parasiticus are aflatoxin B1 (AFB1), aflatoxin B2 (AFB2), aflatoxin G1 (AFG1) and aflatoxin G2 (AFG2). Within the aflatoxin pathway, the cytochrome P450 monooxygenase aflG catalyzes the hydroxylation of AVN to 5'hydroxyaverantin (HAVN). The biosynthesis of aflatoxins begins with the norsolorinic acid synthase aflC that combines a hexanoyl starter unit produced by the fatty acid synthase aflA/aflB and 7 malonyl-CoA extender units to synthesize the precursor NOR. The second step is the conversion of NOR to averantin and requires the norsolorinic acid ketoreductase aflD, which catalyzes the dehydration of norsolorinic acid to form (1'S)-averantin. The norsolorinic acid reductases aflE and aflF may also play a role in the conversion of NOR to AVN. The cytochrome P450 monooxygenase aflG then catalyzes the hydroxylation of AVN to 5'hydroxyaverantin (HAVN). The next step is performed by the 5'-hydroxyaverantin dehydrogenase aflH that transforms HAVN to 5'-oxoaverantin (OAVN) which is further converted to averufin (AVF) by aflK that plays a dual role in the pathway, as a 5'-oxoaverantin cyclase that mediates conversion of 5'-oxoaverantin, as well as a versicolorin B synthase in a later step in the pathway. The averufin oxidase aflI catalyzes the conversion of AVF to versiconal hemiacetal acetate (VHA). VHA is then the substrate for the versiconal hemiacetal acetate esterase aflJ to yield versiconal (VAL). Versicolorin B synthase aflK then converts VAL to versicolorin B (VERB) by closing the bisfuran ring of aflatoxin which is required for DNA-binding, thus giving to aflatoxin its activity as a mutagen. Then, the activity of the versicolorin B desaturase aflL leads to versicolorin A (VERA). A branch point starts from VERB since it can also be converted to dihydrodemethylsterigmatocystin (DMDHST), probably also by aflL, VERA being a precursor for aflatoxins B1 and G1, and DMDHST for aflatoxins B2 and G2. Next, the versicolorin reductase aflM and the cytochrome P450 monooxygenase aflN are involved in conversion of VERA to demethylsterigmatocystin (DMST). AflX and aflY seem also involved in this step, through probable aflX-mediated epoxide ring-opening step following versicolorin A oxidation and aflY-mediated Baeyer-Villiger oxidation required for the formation of the xanthone ring. The methyltransferase aflO then leads to the modification of DMST to sterigmatocystin (ST), and of DMDHST to dihydrosterigmatocystin (DHST). Both ST and DHST are then substrates of the O-methyltransferase aflP to yield O-methylsterigmatocystin (OMST) and dihydro-O-methylsterigmatocystin (DHOMST), respectively. Finally OMST is converted to aflatoxins B1 and G1, and DHOMST to aflatoxins B2 and G2, via the action of several enzymes including O-methylsterigmatocystin oxidoreductase aflQ, the cytochrome P450 monooxygenase aflU, but also the NADH-dependent flavin oxidoreductase nadA which is specifically required for the synthesis of AFG1. This Aspergillus parasiticus (strain ATCC 56775 / NRRL 5862 / SRRC 143 / SU-1) protein is Averantin hydroxylase.